Here is a 629-residue protein sequence, read N- to C-terminus: EF-hand calcium-binding domain-containing protein 7 (629 aa).

Positions 1–25 are disordered; sequence MAISPRSDATFSSQKSTPSESPRTK. The segment covering 7–21 has biased composition (polar residues); that stretch reads SDATFSSQKSTPSES. EF-hand domains are found at residues 102 to 137 and 138 to 173; these read TSKA…RGEK and MTRE…TNEQ. Positions 195–229 are disordered; the sequence is NHIEGSPERDPSPVPKPSPKITRKTDPETFLNKGD. 2 positions are modified to phosphoserine: Ser-200 and Ser-212. Residues 403–438 form the EF-hand 3 domain; that stretch reads EFKSTLSDIFEVIDLDGNGLLSLEEYNFFELRTSGE. 4 residues coordinate Ca(2+): Asp-416, Asp-418, Asn-420, and Glu-427.

As to quaternary structure, component of the EvC complex composed of EFCAB7, IQCE, EVC2 and EVC; built from two subcomplexes, EVC2:EVC and EFCAB7:IQCE. Interacts (via EF-hand 1 and 2) with IQCE (via N-terminus); this interaction anchors the EVC-EVC2 complex in a signaling microdomain at the base of cilia and stimulates the Hedgehog (Hh) pathway. Interacts with EVC2 (via N-terminal end). Interacts with EVC.

The protein localises to the cell projection. Its subcellular location is the cilium membrane. Functionally, component of the EvC complex that positively regulates ciliary Hedgehog (Hh) signaling. Required for the localization of the EVC2:EVC subcomplex at the base of primary cilia. This is EF-hand calcium-binding domain-containing protein 7 (EFCAB7) from Homo sapiens (Human).